A 1792-amino-acid chain; its full sequence is MNNNNNNNNNSNNNNNSNNNNNGNSNNNFFSGKGNALSAYQNKILNIKSNNNNAHHFVNKNVPTYSPPNIIMANKKGGNFNNTSGNIINRYNVENNNHRNTYHPSNNNTRNSVNFLNKNILYGNNNNNNNNNNNINITNISNNNNNINITNISNNNNNINITNISNNNKQPISSNQHPYQQKQSHHHNNSINYNEYMDEKNMNTSQSIFKNMTIQRNSQQFNTSDFVNNINIMNAPHINEHSNIYKRNSLNIVNNAHIISNNMNIQSNRNSNISFPQNMNANIGGLKNSNHNLNNIEMKYNTLNNNMNSINKNTNITNVGTLNIQMKNNPMNVNINQNNYNTDFYVNENKVNSKNKENNNNHINIEKMNYIKSNVYLDNTLVQVNSNNNYNMDKNILNNNNNTYIINDKKNSTVNNNITNMDNNLVPGVMSSMNIPDDIKKRKKKERKKNENIYNNRNKSSINTEEHNNNIIDVANQNSEHFLQNNKQYGNITNIQNNNLSHDMNNYSINNSTTSDVIGIVELYKNSLSSKAVNKKKSKLIKDVIDDNKKRNKKEKKKTIPNNDSIINDMNKNKNVELLNETQIFDNKNYDKNNDIHNNIYNSNDNNLIHNKNNVNNDHTNIKEANNNNNRKSEHSEKNKDVHNYYYANNYQCITDEKNNKQYILWNNRTIEVTFVWLFITKEFNENRKKYTAFLPYLKHFYPNRLKDLIEQLEKYSLLKFNYIMHSSYNMQEEYNKNKEPNNINSNDNNNKNDDNNNNNNKNVDGNNNNNNNINSNDKEVLMNGMLLSDKSTLNSNKQIDNTLINNINSGFNNIIKNMSIDDNTIRSIMDNIENITKGKKKGRKKKQTLENNGDNIKEDIKSSKKDKKKDNINDNNNDNNNDNNNDNNNDNNNDNNNDNNNDNNNNNNNNNNNNNNNNNNNHNNHNDNKNNQGDSKNEQEKKKKTRQYRKKSKITNDDNNEKIKQDNINSNNPKNDLKNNEIICSEEKNMKEDNIPDDTHYKEKRRNTFNLFNLDEGTINMDLFNLSLLENDDALNKKENDMVSKSNIPSSFSSPPKETNNKNDIDKEQSDKHNNVQEFQNLNMNNEKSKDLYFNKNDIDNNDNKDKIINETSSGTFMQNLKETFYEKTKAMFSNLLSDTKISKDDELNNEVDQNCVKTSSGILNKEENNKKEDDEKHFDDNTNEQKKNVDNGEYNEMTAEPGRKKRKKDVLERKKKNLNKEIIKSEKRIRKYRTKKMLLKEAMEKGISNNIVESNITANNNNDNNKNNDNDNNNNNNDNIINNNNNNGDMFSNSYDNSYIKENKYNKKLCFPQNNLLSDFRSEPIIIQQDKRKIIKINTINKIKRKYKKFRFCINKVFKKKSINDIIALNENIHKNKDLLTLFKKKDLANLKKKNLSFFMDTLKLEKIDMLIMKRIQMCLEKIKNTLLLTCTINNVQEIVNILKKAFEKRLYLMWPLIEFSNKYRLDQYFHLLGKNKNHINSSFKDTKLFVHQNISSLILYFNQRSMDDKWVEYLKSQMKPKRRRRKTKMKEQFLEDKPIDYLNTMNSQHSNNFIGENFSEIETVESKANEYAFVGYNQKRLLTQITPYDYRVVLNSNFCNKFFTPNWREQQSIFIDNLHFDMVPDTDEIKKHFENVYIRYMEYDEEKLRSKSDTKSKEHKKKDKKYKMLFKKKEGKGKPGRKKKIKLEIENVSNEIKIKKPRKKYERVKPRKSKNAMMNEEKSGNSEKQINNVLNVTNIENKHKSKKGRKPKESNLNNLNINEDINVAKASPDTLHRASLEFMNPNLFT.

The span at 1–28 (MNNNNNNNNNSNNNNNSNNNNNGNSNNN) shows a compositional bias: low complexity. Disordered regions lie at residues 1–34 (MNNNNNNNNNSNNNNNSNNNNNGNSNNNFFSGKG), 162–187 (TNISNNNKQPISSNQHPYQQKQSHHH), 440–461 (KKRKKKERKKNENIYNNRNKSS), 544–568 (VIDDNKKRNKKEKKKTIPNNDSIIN), 736–777 (NKNK…INSN), 837–979 (TKGK…NDLK), 1044–1071 (VSKSNIPSSFSSPPKETNNKNDIDKEQS), 1084–1106 (NMNNEKSKDLYFNKNDIDNNDNK), 1160–1215 (TSSG…VLER), 1257–1290 (NITANNNNDNNKNNDNDNNNNNNDNIINNNNNNG), 1651–1686 (LRSKSDTKSKEHKKKDKKYKMLFKKKEGKGKPGRKK), 1704–1731 (PRKKYERVKPRKSKNAMMNEEKSGNSEK), and 1742–1761 (IENKHKSKKGRKPKESNLNN). Residues 169-182 (KQPISSNQHPYQQK) show a composition bias toward polar residues. Positions 550–559 (KRNKKEKKKT) are enriched in basic residues. Residues 741 to 776 (PNNINSNDNNNKNDDNNNNNNKNVDGNNNNNNNINS) show a composition bias toward low complexity. The segment covering 838–847 (KGKKKGRKKK) has biased composition (basic residues). The segment covering 856-873 (NIKEDIKSSKKDKKKDNI) has biased composition (basic and acidic residues). Low complexity predominate over residues 874 to 924 (NDNNNDNNNDNNNDNNNDNNNDNNNDNNNDNNNNNNNNNNNNNNNNNNNHN). The segment covering 943–954 (KKKTRQYRKKSK) has biased composition (basic residues). The segment covering 955 to 966 (ITNDDNNEKIKQ) has biased composition (basic and acidic residues). Residues 1045–1057 (SKSNIPSSFSSPP) show a composition bias toward low complexity. Basic and acidic residues-rich tracts occupy residues 1060-1071 (TNNKNDIDKEQS), 1088-1106 (EKSKDLYFNKNDIDNNDNK), and 1166-1192 (NKEENNKKEDDEKHFDDNTNEQKKNVD). Basic residues predominate over residues 1205-1215 (RKKRKKDVLER). A compositionally biased stretch (low complexity) spans 1261-1289 (NNNNDNNKNNDNDNNNNNNDNIINNNNNN). 2 stretches are compositionally biased toward basic residues: residues 1660 to 1686 (KEHKKKDKKYKMLFKKKEGKGKPGRKK) and 1704 to 1717 (PRKKYERVKPRKSK).

This is an uncharacterized protein from Plasmodium falciparum (isolate 3D7).